We begin with the raw amino-acid sequence, 65 residues long: Large ribosomal subunit protein bL35 (65 aa).

Basic residues predominate over residues 1-26 (MPKIKTHRGAAKRFSKTGTGKIKRSH). The interval 1–41 (MPKIKTHRGAAKRFSKTGTGKIKRSHAFTSHILTSKTRKNK) is disordered.

The protein belongs to the bacterial ribosomal protein bL35 family.

The chain is Large ribosomal subunit protein bL35 from Geotalea daltonii (strain DSM 22248 / JCM 15807 / FRC-32) (Geobacter daltonii).